The following is a 203-amino-acid chain: MAKLYFNYATMNAGKTTMLLQASYNYRERGMTTMLFVAGHYRKGDSGLISSRIGLETEAEMFRDGDDLFARVAEHHDHTTVHCVFVDEAQFLEEEQVWQLARIADRLNIPVMCYGLRTDFQGKLFSGSRALLAIADDLREVRTICRCGRKATMVVRLGADGKVARQGEQVAIGKDVYVSLCRRHWEEEMGRAAPDDFIGFMKS.

Residues 9–16 and 87–90 contribute to the ATP site; these read ATMNAGKT and DEAQ. Glutamate 88 functions as the Proton acceptor in the catalytic mechanism. Zn(2+) is bound by residues cysteine 145, cysteine 147, cysteine 181, and histidine 184.

The protein belongs to the thymidine kinase family. As to quaternary structure, homotetramer.

The protein localises to the cytoplasm. The catalysed reaction is thymidine + ATP = dTMP + ADP + H(+). The polypeptide is Thymidine kinase (Mesorhizobium japonicum (strain LMG 29417 / CECT 9101 / MAFF 303099) (Mesorhizobium loti (strain MAFF 303099))).